Reading from the N-terminus, the 423-residue chain is Ferrochelatase, mitochondrial (423 aa).

A mitochondrion-targeting transit peptide spans 1–54 (MRSLGANMAAALRAAGVLLRDPLVSSSWRVYQPWRWKSVAAAAAATTETAQHAQ). Lysine 57 is modified (N6-acetyllysine). The protoporphyrin IX site is built by arginine 115, tyrosine 123, and serine 130. Residue lysine 138 is modified to N6-succinyllysine. Position 196 (cysteine 196) interacts with [2Fe-2S] cluster. Residues histidine 230 and aspartate 383 contribute to the active site. [2Fe-2S] cluster is bound by residues cysteine 403, cysteine 406, and cysteine 411. Lysine 415 carries the post-translational modification N6-acetyllysine; alternate. Lysine 415 is modified (N6-succinyllysine; alternate).

Belongs to the ferrochelatase family. In terms of assembly, homodimer. Homotetramer. Interaction with PGRMC1; the interaction results in decreased FECH activity. Interacts with ABCB10 and SLC25A37; this interaction forms an oligomeric complex. Forms a complex with ABCB7 and ABCB10, where a dimeric FECH bridges ABCB7 and ABCB10 homodimers; this complex may be required for cellular iron homeostasis, mitochondrial function and heme biosynthesis. Interacts with ABCB7 and ABCB10. [2Fe-2S] cluster is required as a cofactor.

The protein localises to the mitochondrion inner membrane. The enzyme catalyses heme b + 2 H(+) = protoporphyrin IX + Fe(2+). The protein operates within porphyrin-containing compound metabolism; protoheme biosynthesis; protoheme from protoporphyrin-IX: step 1/1. In terms of biological role, catalyzes the ferrous insertion into protoporphyrin IX and participates in the terminal step in the heme biosynthetic pathway. This Pan troglodytes (Chimpanzee) protein is Ferrochelatase, mitochondrial.